We begin with the raw amino-acid sequence, 376 residues long: Cellular tumor antigen p53 (376 aa).

The segment at Met-1–Trp-36 is transcription activation (acidic). The DNA-binding element occupies Asp-77–Gln-268. Residues Arg-150–Asp-159 show a composition bias toward basic and acidic residues. The interval Arg-150 to Leu-171 is disordered. Zn(2+) contacts are provided by Cys-151, His-154, Cys-214, and Cys-218. The interval Arg-249–Arg-256 is interaction with DNA. Basic and acidic residues-rich tracts occupy residues Asp-257–Glu-270 and Ser-282–Lys-294. A disordered region spans residues Asp-257 to Tyr-306. A Bipartite nuclear localization signal motif is present at residues Lys-280 to Lys-297. The interval Asp-303–Pro-334 is oligomerization. A Nuclear export signal motif is present at residues Glu-317 to Leu-328. The segment at Gln-342–Asp-376 is disordered. Residues Lys-347–Lys-372 are basic (repression of DNA-binding). Residues Cys-349–Lys-361 are compositionally biased toward basic and acidic residues.

It belongs to the p53 family. As to quaternary structure, binds DNA as a homotetramer. The cofactor is Zn(2+).

It localises to the cytoplasm. The protein localises to the nucleus. Multifunctional transcription factor that induces cell cycle arrest, DNA repair or apoptosis upon binding to its target DNA sequence. Acts as a tumor suppressor in many tumor types; induces growth arrest or apoptosis depending on the physiological circumstances and cell type. Negatively regulates cell division by controlling expression of a set of genes required for this process. One of the activated genes is an inhibitor of cyclin-dependent kinases. Apoptosis induction seems to be mediated either by stimulation of BAX and FAS antigen expression, or by repression of Bcl-2 expression. The sequence is that of Cellular tumor antigen p53 (tp53) from Ictalurus punctatus (Channel catfish).